The chain runs to 24 residues: Brevinin-1Ba (24 aa).

Cysteine 18 and cysteine 24 are disulfide-bonded.

Expressed by the skin glands.

Its subcellular location is the secreted. Its function is as follows. Antibacterial activity against Gram-positive bacterium S.aureus. The protein is Brevinin-1Ba of Lithobates berlandieri (Rio Grande leopard frog).